Reading from the N-terminus, the 721-residue chain is Methionine--tRNA ligase (721 aa).

Positions 27–37 (PYANGQIHIGH) match the 'HIGH' region motif. Residues cysteine 158, cysteine 161, cysteine 171, and cysteine 174 each coordinate Zn(2+). A 'KMSKS' region motif is present at residues 348–352 (KMSKS). Lysine 351 contacts ATP. The 107-residue stretch at 615-721 (DFAKIDLRIA…SGAKPGMRVK (107 aa)) folds into the tRNA-binding domain.

It belongs to the class-I aminoacyl-tRNA synthetase family. MetG type 1 subfamily. In terms of assembly, homodimer. Zn(2+) serves as cofactor.

The protein localises to the cytoplasm. The enzyme catalyses tRNA(Met) + L-methionine + ATP = L-methionyl-tRNA(Met) + AMP + diphosphate. In terms of biological role, is required not only for elongation of protein synthesis but also for the initiation of all mRNA translation through initiator tRNA(fMet) aminoacylation. This is Methionine--tRNA ligase from Burkholderia vietnamiensis (strain G4 / LMG 22486) (Burkholderia cepacia (strain R1808)).